We begin with the raw amino-acid sequence, 196 residues long: Putative 3-methyladenine DNA glycosylase (196 aa).

Belongs to the DNA glycosylase MPG family.

This Bacillus velezensis (strain DSM 23117 / BGSC 10A6 / LMG 26770 / FZB42) (Bacillus amyloliquefaciens subsp. plantarum) protein is Putative 3-methyladenine DNA glycosylase.